The chain runs to 341 residues: tRNA N6-adenosine threonylcarbamoyltransferase (341 aa).

The Fe cation site is built by His111 and His115. Substrate contacts are provided by residues 133–137 (AVSGG), Asp166, Gly179, Asp183, and Asn273. Asp301 contributes to the Fe cation binding site.

It belongs to the KAE1 / TsaD family. The cofactor is Fe(2+).

It is found in the cytoplasm. The catalysed reaction is L-threonylcarbamoyladenylate + adenosine(37) in tRNA = N(6)-L-threonylcarbamoyladenosine(37) in tRNA + AMP + H(+). Functionally, required for the formation of a threonylcarbamoyl group on adenosine at position 37 (t(6)A37) in tRNAs that read codons beginning with adenine. Is involved in the transfer of the threonylcarbamoyl moiety of threonylcarbamoyl-AMP (TC-AMP) to the N6 group of A37, together with TsaE and TsaB. TsaD likely plays a direct catalytic role in this reaction. This Geotalea daltonii (strain DSM 22248 / JCM 15807 / FRC-32) (Geobacter daltonii) protein is tRNA N6-adenosine threonylcarbamoyltransferase.